The following is a 501-amino-acid chain: Bifunctional purine biosynthesis protein PurH (501 aa).

The MGS-like domain occupies 1-144 (MKKRALISVF…KNFKDVVVLS (144 aa)).

Belongs to the PurH family.

The enzyme catalyses (6R)-10-formyltetrahydrofolate + 5-amino-1-(5-phospho-beta-D-ribosyl)imidazole-4-carboxamide = 5-formamido-1-(5-phospho-D-ribosyl)imidazole-4-carboxamide + (6S)-5,6,7,8-tetrahydrofolate. The catalysed reaction is IMP + H2O = 5-formamido-1-(5-phospho-D-ribosyl)imidazole-4-carboxamide. The protein operates within purine metabolism; IMP biosynthesis via de novo pathway; 5-formamido-1-(5-phospho-D-ribosyl)imidazole-4-carboxamide from 5-amino-1-(5-phospho-D-ribosyl)imidazole-4-carboxamide (10-formyl THF route): step 1/1. It functions in the pathway purine metabolism; IMP biosynthesis via de novo pathway; IMP from 5-formamido-1-(5-phospho-D-ribosyl)imidazole-4-carboxamide: step 1/1. In Clostridium perfringens (strain SM101 / Type A), this protein is Bifunctional purine biosynthesis protein PurH.